Reading from the N-terminus, the 521-residue chain is MLLELALGLLVLALFLHLRPTPTAKSKALRHLPNPPSPKPRLPFIGHLHLLKDKLLHYALIDLSKKHGPLFSLYFGSMPTVVASTPELFKLFLQTHEATSFNTRFQTSAIRRLTYDSSVAMVPFGPYWKFVRKLIMNDLLNATTVNKLRPLRTQQIRKFLRVMAQGAEAQKPLDLTEELLKWTNSTISMMMLGEAEEIRDIAREVLKIFGEYSLTDFIWPLKHLKVGKYEKRIDDILNKFDPVVERVIKKRREIVRRRKNGEVVEGEVSGVFLDTLLEFAEDETMEIKITKDHIKGLVVDFFSAGTDSTAVATEWALAELINNPKVLEKAREEVYSVVGKDRLVDEVDTQNLPYIRAIVKETFRMHPPLPVVKRKCTEECEINGYVIPEGALILFNVWQVGRDPKYWDRPSEFRPERFLETGAEGEAGPLDLRGQHFQLLPFGSGRRMCPGVNLATSGMATLLASLIQCFDLQVLGPQGQILKGGDAKVSMEERAGLTVPRAHSLVCVPLARIGVASKLLS.

A helical membrane pass occupies residues 2–23; sequence LLELALGLLVLALFLHLRPTPT. Residue Cys-449 participates in heme binding.

The protein belongs to the cytochrome P450 family. It depends on heme as a cofactor.

The protein localises to the endoplasmic reticulum membrane. The protein resides in the microsome membrane. The catalysed reaction is (2S)-liquiritigenin + reduced [NADPH--hemoprotein reductase] + O2 = (2R,3S)-2,4',7-trihydroxyisoflavanone + oxidized [NADPH--hemoprotein reductase] + H2O + H(+). It catalyses the reaction (2S)-naringenin + reduced [NADPH--hemoprotein reductase] + O2 = 2-hydroxy-2,3-dihydrogenistein + oxidized [NADPH--hemoprotein reductase] + H2O + H(+). Functionally, involved in isoflavonoid biosynthesis. Converts liquiritigenin to 2-hydroxyisoflavanone which spontaneously dehydrates to daidzein. This is 2-hydroxyisoflavanone synthase (IFS2) from Glycine max (Soybean).